The chain runs to 468 residues: MNFVTCHVQMRLLLQRRLVRLRESELFRPQTSLSTFKRHASQKTRPIQKCSRKYARILLLSVLVPYTGYAFYVSLATVKQIDLRNEMCQRLEENNNEVTYKGSLLKYSPLEVLGRFENPFEEYRIQTVFEFFANRVFELFERNRGGIPRDVHQMNKLMPVHKPTWGPNLVDVDPAEETALPLECKVLDELHIPTAVEENEGSKCPVYNTWLGQSCNYTVYNGLRILTDPLFSDFLIHKTLGPKRITQMPSQITEVPKPDIILVSHNHPDHLDLESLEYWSGKDSPLWIVPKGMKSYMTSNGCDNVLELSWWETLQVKKNNEIYHISATPAMHWSGRSLLDTNKSLWCSFLLTHHGNPILFHAGDTGYVKDLFVRIKERFGKGCKLALLPCGQYCPEWHQKPRHINPQEVLKIMKDLEARNVLGVHWGTFVLSGEYFLEPKEKLEMLAEWGGFKDRCYCPELGKTECFD.

The N-terminal 39 residues, 1 to 39 (MNFVTCHVQMRLLLQRRLVRLRESELFRPQTSLSTFKRH), are a transit peptide targeting the mitochondrion. The helical transmembrane segment at 54 to 76 (YARILLLSVLVPYTGYAFYVSLA) threads the bilayer. Residues H265, H267, D269, H270, H332, and H425 each coordinate Zn(2+).

Belongs to the NAPE-PLD family. Requires Zn(2+) as cofactor.

It is found in the mitochondrion membrane. The catalysed reaction is an N-acyl-1,2-diacyl-sn-glycero-3-phosphoethanolamine + H2O = an N-acylethanolamine + a 1,2-diacyl-sn-glycero-3-phosphate + H(+). Hydrolyzes N-acyl-phosphatidylethanolamines (NAPEs) to produce N-acylethanolamines (NAEs). The polypeptide is N-acyl-phosphatidylethanolamine-hydrolyzing phospholipase D, mitochondrial (FMP30) (Saccharomyces cerevisiae (strain ATCC 204508 / S288c) (Baker's yeast)).